The following is a 211-amino-acid chain: Outer-membrane lipoprotein carrier protein (211 aa).

The signal sequence occupies residues 1–24 (MNTIKILIGLLGIFLFSLSGIVSA).

Belongs to the LolA family. Monomer.

It localises to the periplasm. Functionally, participates in the translocation of lipoproteins from the inner membrane to the outer membrane. Only forms a complex with a lipoprotein if the residue after the N-terminal Cys is not an aspartate (The Asp acts as a targeting signal to indicate that the lipoprotein should stay in the inner membrane). In Coxiella burnetii (strain RSA 331 / Henzerling II), this protein is Outer-membrane lipoprotein carrier protein.